Reading from the N-terminus, the 45-residue chain is Large ribosomal subunit protein bL36 (45 aa).

A disordered region spans residues 26–45; the sequence is VINKKDPNRKQRQKGPARKK. Positions 35-45 are enriched in basic residues; that stretch reads KQRQKGPARKK.

The protein belongs to the bacterial ribosomal protein bL36 family.

This is Large ribosomal subunit protein bL36 from Protochlamydia amoebophila (strain UWE25).